Consider the following 349-residue polypeptide: Flap endonuclease 1 (349 aa).

The N-domain stretch occupies residues 1–98; the sequence is MDLADLVKDV…EELERRRKAK (98 aa). Mg(2+) is bound by residues aspartate 27, aspartate 80, glutamate 152, glutamate 154, aspartate 173, aspartate 175, and aspartate 236. Positions 116–258 are I-domain; that stretch reads ELRKYSQAIL…RALKIIKKYG (143 aa). The tract at residues 341–349 is interaction with PCNA; sequence RQTGLDRWF.

Belongs to the XPG/RAD2 endonuclease family. FEN1 subfamily. Interacts with PCNA via subunit PCNA1. Requires Mg(2+) as cofactor.

With respect to regulation, heterotrimeric PCNA stimulates the nuclease activity without altering cleavage specificity. Functionally, structure-specific nuclease with 5'-flap endonuclease and 5'-3' exonuclease activities involved in DNA replication and repair. During DNA replication, cleaves the 5'-overhanging flap structure that is generated by displacement synthesis when DNA polymerase encounters the 5'-end of a downstream Okazaki fragment. Binds the unpaired 3'-DNA end and kinks the DNA to facilitate 5' cleavage specificity. Cleaves one nucleotide into the double-stranded DNA from the junction in flap DNA, leaving a nick for ligation. Also involved in the base excision repair (BER) pathway. Acts as a genome stabilization factor that prevents flaps from equilibrating into structures that lead to duplications and deletions. Also possesses 5'-3' exonuclease activity on nicked or gapped double-stranded DNA. DNA polymerase I, DNA ligase and the flap endonuclease may be constitutively associated with the PCNA heterotrimer forming a scanning complex able to couple DNA synthesis and Okazaki fragment maturation. The protein is Flap endonuclease 1 of Saccharolobus solfataricus (strain ATCC 35092 / DSM 1617 / JCM 11322 / P2) (Sulfolobus solfataricus).